A 118-amino-acid polypeptide reads, in one-letter code: Large ribosomal subunit protein bL19 (118 aa).

It belongs to the bacterial ribosomal protein bL19 family.

This protein is located at the 30S-50S ribosomal subunit interface and may play a role in the structure and function of the aminoacyl-tRNA binding site. The chain is Large ribosomal subunit protein bL19 from Geobacter sulfurreducens (strain ATCC 51573 / DSM 12127 / PCA).